The primary structure comprises 198 residues: Inner membrane-spanning protein YciB (198 aa).

Helical transmembrane passes span 36 to 56 (IFSA…ILYI), 67 to 87 (LTLV…SETF), 90 to 110 (WKAP…HFIG), 133 to 153 (LNIA…YVAF), and 162 to 182 (FKVF…GIYL).

It belongs to the YciB family.

The protein resides in the cell inner membrane. Plays a role in cell envelope biogenesis, maintenance of cell envelope integrity and membrane homeostasis. The polypeptide is Inner membrane-spanning protein YciB (Pseudomonas syringae pv. tomato (strain ATCC BAA-871 / DC3000)).